We begin with the raw amino-acid sequence, 668 residues long: DNA ligase (668 aa).

NAD(+) contacts are provided by residues 35 to 39 (DKEYD) and 83 to 84 (SL). Lysine 125 (N6-AMP-lysine intermediate) is an active-site residue. Residues arginine 147, glutamate 181, and lysine 317 each coordinate NAD(+). Positions 410, 413, 426, and 432 each coordinate Zn(2+). The BRCT domain occupies 591-668 (KKDNKFNGKT…TEEEFNEMIN (78 aa)).

Belongs to the NAD-dependent DNA ligase family. LigA subfamily. The cofactor is Mg(2+). Mn(2+) is required as a cofactor.

The catalysed reaction is NAD(+) + (deoxyribonucleotide)n-3'-hydroxyl + 5'-phospho-(deoxyribonucleotide)m = (deoxyribonucleotide)n+m + AMP + beta-nicotinamide D-nucleotide.. Functionally, DNA ligase that catalyzes the formation of phosphodiester linkages between 5'-phosphoryl and 3'-hydroxyl groups in double-stranded DNA using NAD as a coenzyme and as the energy source for the reaction. It is essential for DNA replication and repair of damaged DNA. In Clostridium tetani (strain Massachusetts / E88), this protein is DNA ligase.